Here is a 364-residue protein sequence, read N- to C-terminus: GTPase Obg (364 aa).

The Obg domain maps to 1–159; sequence MKFVDEAYID…KSLKLELKVL (159 aa). An OBG-type G domain is found at 160 to 334; that stretch reads ADVGLLGMPN…LVKTIYQHVK (175 aa). GTP is bound by residues 166-173, 191-195, 213-216, 284-287, and 315-317; these read GMPNAGKS, FTTLH, DLPG, NKLD, and SAL. Residues serine 173 and threonine 193 each coordinate Mg(2+). Residues 337-364 are disordered; sequence QKSEQPEEEVDPRFIELPPEPAKPASSD.

It belongs to the TRAFAC class OBG-HflX-like GTPase superfamily. OBG GTPase family. In terms of assembly, monomer. Mg(2+) serves as cofactor.

The protein localises to the cytoplasm. In terms of biological role, an essential GTPase which binds GTP, GDP and possibly (p)ppGpp with moderate affinity, with high nucleotide exchange rates and a fairly low GTP hydrolysis rate. Plays a role in control of the cell cycle, stress response, ribosome biogenesis and in those bacteria that undergo differentiation, in morphogenesis control. This is GTPase Obg from Polaromonas naphthalenivorans (strain CJ2).